The following is a 269-amino-acid chain: Ribosomal RNA small subunit methyltransferase A (269 aa).

S-adenosyl-L-methionine contacts are provided by His-12, Leu-14, Gly-39, Glu-60, Asp-81, and Asn-103.

This sequence belongs to the class I-like SAM-binding methyltransferase superfamily. rRNA adenine N(6)-methyltransferase family. RsmA subfamily.

It localises to the cytoplasm. It catalyses the reaction adenosine(1518)/adenosine(1519) in 16S rRNA + 4 S-adenosyl-L-methionine = N(6)-dimethyladenosine(1518)/N(6)-dimethyladenosine(1519) in 16S rRNA + 4 S-adenosyl-L-homocysteine + 4 H(+). Specifically dimethylates two adjacent adenosines (A1518 and A1519) in the loop of a conserved hairpin near the 3'-end of 16S rRNA in the 30S particle. May play a critical role in biogenesis of 30S subunits. This chain is Ribosomal RNA small subunit methyltransferase A, found in Leptothrix cholodnii (strain ATCC 51168 / LMG 8142 / SP-6) (Leptothrix discophora (strain SP-6)).